Consider the following 345-residue polypeptide: uncharacterized protein (345 aa).

3 Solcar repeats span residues 80-153 (MSFF…MKSR), 162-246 (SDPQ…LKLK), and 256-339 (NLAH…ILNF). The next 6 membrane-spanning stretches (helical) occupy residues 83 to 103 (FEAL…LFPI), 128 to 148 (GLGS…TTYE), 220 to 240 (AGYG…FPIW), 262 to 282 (AISG…FDVV), 296 to 316 (VFTI…KGIV), and 319 to 339 (VLWL…ILNF).

This sequence belongs to the mitochondrial carrier (TC 2.A.29) family.

The protein localises to the mitochondrion inner membrane. This is an uncharacterized protein from Schizosaccharomyces pombe (strain 972 / ATCC 24843) (Fission yeast).